The following is a 423-amino-acid chain: Glutamyl-tRNA reductase (423 aa).

Substrate is bound by residues 49 to 52 (TCNR), Ser-111, 116 to 118 (EPQ), and Gln-122. Cys-50 serves as the catalytic Nucleophile. 191–196 (GAGEMS) is an NADP(+) binding site.

This sequence belongs to the glutamyl-tRNA reductase family. As to quaternary structure, homodimer.

It catalyses the reaction (S)-4-amino-5-oxopentanoate + tRNA(Glu) + NADP(+) = L-glutamyl-tRNA(Glu) + NADPH + H(+). It participates in porphyrin-containing compound metabolism; protoporphyrin-IX biosynthesis; 5-aminolevulinate from L-glutamyl-tRNA(Glu): step 1/2. Catalyzes the NADPH-dependent reduction of glutamyl-tRNA(Glu) to glutamate 1-semialdehyde (GSA). The sequence is that of Glutamyl-tRNA reductase from Syntrophus aciditrophicus (strain SB).